The sequence spans 103 residues: Large ribosomal subunit protein bL21 (103 aa).

Belongs to the bacterial ribosomal protein bL21 family. Part of the 50S ribosomal subunit. Contacts protein L20.

In terms of biological role, this protein binds to 23S rRNA in the presence of protein L20. This chain is Large ribosomal subunit protein bL21, found in Clostridium kluyveri (strain NBRC 12016).